A 235-amino-acid chain; its full sequence is Phosphoribosylaminoimidazole-succinocarboxamide synthase (235 aa).

The protein belongs to the SAICAR synthetase family.

It catalyses the reaction 5-amino-1-(5-phospho-D-ribosyl)imidazole-4-carboxylate + L-aspartate + ATP = (2S)-2-[5-amino-1-(5-phospho-beta-D-ribosyl)imidazole-4-carboxamido]succinate + ADP + phosphate + 2 H(+). It functions in the pathway purine metabolism; IMP biosynthesis via de novo pathway; 5-amino-1-(5-phospho-D-ribosyl)imidazole-4-carboxamide from 5-amino-1-(5-phospho-D-ribosyl)imidazole-4-carboxylate: step 1/2. The protein is Phosphoribosylaminoimidazole-succinocarboxamide synthase of Lachnoclostridium phytofermentans (strain ATCC 700394 / DSM 18823 / ISDg) (Clostridium phytofermentans).